A 239-amino-acid polypeptide reads, in one-letter code: Norbelladine 4'-O-methyltransferase 3 (239 aa).

S-adenosyl-L-methionine is bound by residues Val55, Glu77, 79–80, Ser85, Asp103, and Ala132; that span reads GV. Asp155 provides a ligand contact to a divalent metal cation. S-adenosyl-L-methionine is bound at residue Asp157. Asp181 and Asn182 together coordinate a divalent metal cation.

This sequence belongs to the class I-like SAM-binding methyltransferase superfamily. Cation-dependent O-methyltransferase family. Mg(2+) is required as a cofactor.

The enzyme catalyses norbelladine + S-adenosyl-L-methionine = 4'-O-methylnorbelladine + S-adenosyl-L-homocysteine + H(+). The protein operates within alkaloid biosynthesis. Functionally, 4'-O-methyltransferase converting norbelladine to 4'-O-methylnorbelladine. 4'-O-methylnorbelladine is a precursor to all Amaryllidaceae alkaloids such as galanthamine, lycorine and haemanthamine, and including haemanthamine- and crinamine-type alkaloids, promising anticancer agents. In Narcissus aff. pseudonarcissus MK-2014 (Daffodil), this protein is Norbelladine 4'-O-methyltransferase 3.